A 178-amino-acid polypeptide reads, in one-letter code: Crossover junction endodeoxyribonuclease RuvC (178 aa).

Residues Asp8, Glu72, and Asp144 contribute to the active site. Mg(2+) contacts are provided by Asp8, Glu72, and Asp144.

The protein belongs to the RuvC family. In terms of assembly, homodimer which binds Holliday junction (HJ) DNA. The HJ becomes 2-fold symmetrical on binding to RuvC with unstacked arms; it has a different conformation from HJ DNA in complex with RuvA. In the full resolvosome a probable DNA-RuvA(4)-RuvB(12)-RuvC(2) complex forms which resolves the HJ. Mg(2+) serves as cofactor.

It localises to the cytoplasm. It catalyses the reaction Endonucleolytic cleavage at a junction such as a reciprocal single-stranded crossover between two homologous DNA duplexes (Holliday junction).. Functionally, the RuvA-RuvB-RuvC complex processes Holliday junction (HJ) DNA during genetic recombination and DNA repair. Endonuclease that resolves HJ intermediates. Cleaves cruciform DNA by making single-stranded nicks across the HJ at symmetrical positions within the homologous arms, yielding a 5'-phosphate and a 3'-hydroxyl group; requires a central core of homology in the junction. The consensus cleavage sequence is 5'-(A/T)TT(C/G)-3'. Cleavage occurs on the 3'-side of the TT dinucleotide at the point of strand exchange. HJ branch migration catalyzed by RuvA-RuvB allows RuvC to scan DNA until it finds its consensus sequence, where it cleaves and resolves the cruciform DNA. This chain is Crossover junction endodeoxyribonuclease RuvC, found in Idiomarina loihiensis (strain ATCC BAA-735 / DSM 15497 / L2-TR).